We begin with the raw amino-acid sequence, 400 residues long: Acetate kinase (400 aa).

Asn-10 is a binding site for Mg(2+). Position 17 (Lys-17) interacts with ATP. Residue Arg-91 coordinates substrate. Asp-148 functions as the Proton donor/acceptor in the catalytic mechanism. Residues 208-212 (HLGNG), 283-285 (DCR), and 331-335 (GIGEN) each bind ATP. Glu-385 serves as a coordination point for Mg(2+).

Belongs to the acetokinase family. In terms of assembly, homodimer. Mg(2+) is required as a cofactor. Requires Mn(2+) as cofactor.

It localises to the cytoplasm. The catalysed reaction is acetate + ATP = acetyl phosphate + ADP. It participates in metabolic intermediate biosynthesis; acetyl-CoA biosynthesis; acetyl-CoA from acetate: step 1/2. In terms of biological role, catalyzes the formation of acetyl phosphate from acetate and ATP. Can also catalyze the reverse reaction. This chain is Acetate kinase, found in Shewanella putrefaciens (strain CN-32 / ATCC BAA-453).